A 98-amino-acid chain; its full sequence is Small ribosomal subunit protein uS19 (98 aa).

The tract at residues Thr77 to Lys98 is disordered.

This sequence belongs to the universal ribosomal protein uS19 family.

Protein S19 forms a complex with S13 that binds strongly to the 16S ribosomal RNA. The polypeptide is Small ribosomal subunit protein uS19 (Prosthecochloris aestuarii (strain DSM 271 / SK 413)).